Here is a 157-residue protein sequence, read N- to C-terminus: Transcription elongation factor GreA (157 aa).

Belongs to the GreA/GreB family.

Functionally, necessary for efficient RNA polymerase transcription elongation past template-encoded arresting sites. The arresting sites in DNA have the property of trapping a certain fraction of elongating RNA polymerases that pass through, resulting in locked ternary complexes. Cleavage of the nascent transcript by cleavage factors such as GreA or GreB allows the resumption of elongation from the new 3'terminus. GreA releases sequences of 2 to 3 nucleotides. This chain is Transcription elongation factor GreA, found in Brucella abortus (strain S19).